Reading from the N-terminus, the 315-residue chain is Aspartate carbamoyltransferase catalytic subunit (315 aa).

Carbamoyl phosphate-binding residues include arginine 64 and threonine 65. Lysine 92 provides a ligand contact to L-aspartate. Carbamoyl phosphate is bound by residues arginine 114, histidine 142, and glutamine 145. 2 residues coordinate L-aspartate: arginine 175 and arginine 229. Residues glycine 270 and proline 271 each coordinate carbamoyl phosphate.

This sequence belongs to the aspartate/ornithine carbamoyltransferase superfamily. ATCase family. Heterododecamer (2C3:3R2) of six catalytic PyrB chains organized as two trimers (C3), and six regulatory PyrI chains organized as three dimers (R2).

It carries out the reaction carbamoyl phosphate + L-aspartate = N-carbamoyl-L-aspartate + phosphate + H(+). Its pathway is pyrimidine metabolism; UMP biosynthesis via de novo pathway; (S)-dihydroorotate from bicarbonate: step 2/3. In terms of biological role, catalyzes the condensation of carbamoyl phosphate and aspartate to form carbamoyl aspartate and inorganic phosphate, the committed step in the de novo pyrimidine nucleotide biosynthesis pathway. The protein is Aspartate carbamoyltransferase catalytic subunit of Xanthobacter autotrophicus (strain ATCC BAA-1158 / Py2).